A 220-amino-acid chain; its full sequence is 7-cyano-7-deazaguanine synthase (220 aa).

11-21 (VSGGMDSVTLM) lines the ATP pocket. Zn(2+) contacts are provided by Cys-186, Cys-194, Cys-197, and Cys-200.

Belongs to the QueC family. Zn(2+) serves as cofactor.

The catalysed reaction is 7-carboxy-7-deazaguanine + NH4(+) + ATP = 7-cyano-7-deazaguanine + ADP + phosphate + H2O + H(+). It functions in the pathway purine metabolism; 7-cyano-7-deazaguanine biosynthesis. In terms of biological role, catalyzes the ATP-dependent conversion of 7-carboxy-7-deazaguanine (CDG) to 7-cyano-7-deazaguanine (preQ(0)). The chain is 7-cyano-7-deazaguanine synthase from Porphyromonas gingivalis (strain ATCC 33277 / DSM 20709 / CIP 103683 / JCM 12257 / NCTC 11834 / 2561).